Here is a 703-residue protein sequence, read N- to C-terminus: Polyribonucleotide nucleotidyltransferase (703 aa).

Mg(2+) contacts are provided by aspartate 484 and aspartate 490. In terms of domain architecture, KH spans 551–610 (PTVTTLRVLPEKISVIIGPAGKNIKKIIEETGVKIDLDPTGLVKIYATSKIAAEKAIDMI). In terms of domain architecture, S1 motif spans 620-688 (GEVYLGKVTR…DQGRIKVSLK (69 aa)).

It belongs to the polyribonucleotide nucleotidyltransferase family. Mg(2+) serves as cofactor.

The protein resides in the cytoplasm. The catalysed reaction is RNA(n+1) + phosphate = RNA(n) + a ribonucleoside 5'-diphosphate. Its function is as follows. Involved in mRNA degradation. Catalyzes the phosphorolysis of single-stranded polyribonucleotides processively in the 3'- to 5'-direction. In Sulfurihydrogenibium sp. (strain YO3AOP1), this protein is Polyribonucleotide nucleotidyltransferase.